A 174-amino-acid chain; its full sequence is NADH-quinone oxidoreductase subunit B 1 (174 aa).

[4Fe-4S] cluster-binding residues include C53, C54, C118, and C148.

Belongs to the complex I 20 kDa subunit family. As to quaternary structure, NDH-1 is composed of 14 different subunits. Subunits NuoB, C, D, E, F, and G constitute the peripheral sector of the complex. [4Fe-4S] cluster serves as cofactor.

It is found in the cell inner membrane. The catalysed reaction is a quinone + NADH + 5 H(+)(in) = a quinol + NAD(+) + 4 H(+)(out). In terms of biological role, NDH-1 shuttles electrons from NADH, via FMN and iron-sulfur (Fe-S) centers, to quinones in the respiratory chain. The immediate electron acceptor for the enzyme in this species is believed to be ubiquinone. Couples the redox reaction to proton translocation (for every two electrons transferred, four hydrogen ions are translocated across the cytoplasmic membrane), and thus conserves the redox energy in a proton gradient. This chain is NADH-quinone oxidoreductase subunit B 1, found in Cereibacter sphaeroides (strain KD131 / KCTC 12085) (Rhodobacter sphaeroides).